The following is an 863-amino-acid chain: Leucine--tRNA ligase (863 aa).

A 'HIGH' region motif is present at residues 42 to 52 (PYPSGRLHMGH). Residues 622–626 (KMSKS) carry the 'KMSKS' region motif. Position 625 (Lys-625) interacts with ATP.

The protein belongs to the class-I aminoacyl-tRNA synthetase family.

It localises to the cytoplasm. The enzyme catalyses tRNA(Leu) + L-leucine + ATP = L-leucyl-tRNA(Leu) + AMP + diphosphate. This chain is Leucine--tRNA ligase, found in Shewanella sediminis (strain HAW-EB3).